The chain runs to 368 residues: DNA replication and repair protein RecF (368 aa).

Residue 30 to 37 (GKNGTGKT) coordinates ATP.

It belongs to the RecF family.

Its subcellular location is the cytoplasm. In terms of biological role, the RecF protein is involved in DNA metabolism; it is required for DNA replication and normal SOS inducibility. RecF binds preferentially to single-stranded, linear DNA. It also seems to bind ATP. This Chloroherpeton thalassium (strain ATCC 35110 / GB-78) protein is DNA replication and repair protein RecF.